The chain runs to 491 residues: Fatty acyl-CoA reductase 1 (491 aa).

This sequence belongs to the fatty acyl-CoA reductase family. Expressed in the endodermal cell layer surrounding the central vasculature in roots. Expressed in the hilum region of seeds. Expressed in lateral root tips, cotyledons, the shoot apex, young leaves, petals, stamen filaments, and receptacle of siliques.

It catalyses the reaction a long-chain fatty acyl-CoA + 2 NADPH + 2 H(+) = a long-chain primary fatty alcohol + 2 NADP(+) + CoA. Functionally, catalyzes the reduction of fatty acyl-CoA to fatty alcohols. Catalyzes specifically the formation of C18:0 and C22:0 fatty alcohols. Provides the fatty alcohols required for synthesis of suberin in roots, seed coat and wound-induced leaf tissue. Provides the fatty alcohols required for synthesis of alkyl hydroxycinnamates in root waxes. The polypeptide is Fatty acyl-CoA reductase 1 (Arabidopsis thaliana (Mouse-ear cress)).